The following is a 125-amino-acid chain: NADPH-dependent 7-cyano-7-deazaguanine reductase (125 aa).

The active-site Thioimide intermediate is the Cys41. Asp48 functions as the Proton donor in the catalytic mechanism. Substrate contacts are provided by residues 63-65 (IEL) and 82-83 (HE).

The protein belongs to the GTP cyclohydrolase I family. QueF type 1 subfamily.

It is found in the cytoplasm. It catalyses the reaction 7-aminomethyl-7-carbaguanine + 2 NADP(+) = 7-cyano-7-deazaguanine + 2 NADPH + 3 H(+). It participates in tRNA modification; tRNA-queuosine biosynthesis. Functionally, catalyzes the NADPH-dependent reduction of 7-cyano-7-deazaguanine (preQ0) to 7-aminomethyl-7-deazaguanine (preQ1). This Sulfurovum sp. (strain NBC37-1) protein is NADPH-dependent 7-cyano-7-deazaguanine reductase.